The sequence spans 372 residues: tRNA-specific 2-thiouridylase MnmA (372 aa).

ATP is bound by residues 17 to 24 (GMSGGVDS) and methionine 43. The interval 103–105 (NPD) is interaction with target base in tRNA. The active-site Nucleophile is cysteine 108. Cysteines 108 and 207 form a disulfide. Glycine 133 provides a ligand contact to ATP. The interval 157 to 159 (KDQ) is interaction with tRNA. Residue cysteine 207 is the Cysteine persulfide intermediate of the active site. The interaction with tRNA stretch occupies residues 319–320 (RY).

This sequence belongs to the MnmA/TRMU family.

The protein localises to the cytoplasm. The enzyme catalyses S-sulfanyl-L-cysteinyl-[protein] + uridine(34) in tRNA + AH2 + ATP = 2-thiouridine(34) in tRNA + L-cysteinyl-[protein] + A + AMP + diphosphate + H(+). In terms of biological role, catalyzes the 2-thiolation of uridine at the wobble position (U34) of tRNA, leading to the formation of s(2)U34. The sequence is that of tRNA-specific 2-thiouridylase MnmA from Vibrio cholerae serotype O1 (strain ATCC 39541 / Classical Ogawa 395 / O395).